Consider the following 205-residue polypeptide: Small ribosomal subunit protein uS4 (205 aa).

The 79-residue stretch at 93 to 171 (SRVSSVLYRS…SPHYLEVDRE (79 aa)) folds into the S4 RNA-binding domain.

The protein belongs to the universal ribosomal protein uS4 family. Part of the 30S ribosomal subunit. Contacts protein S5. The interaction surface between S4 and S5 is involved in control of translational fidelity.

Its function is as follows. One of the primary rRNA binding proteins, it binds directly to 16S rRNA where it nucleates assembly of the body of the 30S subunit. In terms of biological role, with S5 and S12 plays an important role in translational accuracy. The sequence is that of Small ribosomal subunit protein uS4 from Neorickettsia sennetsu (strain ATCC VR-367 / Miyayama) (Ehrlichia sennetsu).